We begin with the raw amino-acid sequence, 122 residues long: MDIVFIEQLSVITTIGVYDWEQTIEQKLVFDIEMAWDNRKAAKSDDVADCLSYADIAETVVSHVEGARFALVERVAEEVAELLLARFNSPWVRIKLSKPGAVARAANVGVIIERGNNLKENN.

Substrate-binding positions include glutamate 21, tyrosine 53, and 72–73; that span reads VE. The active-site Proton donor/acceptor is lysine 98.

The protein belongs to the DHNA family. As to quaternary structure, homooctamer.

It catalyses the reaction 7,8-dihydroneopterin = 6-hydroxymethyl-7,8-dihydropterin + glycolaldehyde. It carries out the reaction 7,8-dihydroneopterin = 7,8-dihydromonapterin. The protein operates within cofactor biosynthesis; tetrahydrofolate biosynthesis; 2-amino-4-hydroxy-6-hydroxymethyl-7,8-dihydropteridine diphosphate from 7,8-dihydroneopterin triphosphate: step 3/4. Catalyzes the conversion of 7,8-dihydroneopterin to 6-hydroxymethyl-7,8-dihydropterin. Can use L-threo-dihydroneopterin and D-erythro-dihydroneopterin as substrates for the formation of 6-hydroxymethyldihydropterin, but it can also catalyze the epimerization of carbon 2' of dihydroneopterin to dihydromonapterin at appreciable velocity. The polypeptide is Dihydroneopterin aldolase (folB) (Escherichia coli O6:H1 (strain CFT073 / ATCC 700928 / UPEC)).